Consider the following 4466-residue polypeptide: Dynein beta chain, ciliary (4466 aa).

Positions 1–1813 are stem; that stretch reads MGDVVDARLD…YANICDAQFK (1813 aa). 154–161 contacts ATP; that stretch reads AGQVKGKT. Coiled coils occupy residues 482–502, 627–643, 734–805, 1036–1056, 1306–1337, and 1443–1468; these read QEFL…DRRL, QKYE…EQKV, VLEV…WTKQ, TLDQ…EADE, WLEI…AWDA, and LLKS…MTSK. 4 AAA regions span residues 1814-2035, 2095-2316, 2422-2669, and 2767-3016; these read YSYE…VLVV, KVVK…IRFK, ELDP…VFQG, and TYNE…ERRY. ATP-binding positions include 1852-1859, 2133-2140, 2460-2467, and 2805-2812; these read GPAGTGKT, GNAGTGKS, GNAGLGKS, and GVGGSGKQ. Coiled-coil stretches lie at residues 3033 to 3134, 3263 to 3325, and 3573 to 3642; these read SLLA…AKAE, EPKR…SRTI, and QERP…EEAK. The segment at 3033–3325 is stalk; that stretch reads SLLAMKSKEL…QEAEATSRTI (293 aa). 2 AAA regions span residues 3409-3636 and 3846-4072; these read LTDD…EISV and VRNF…VLYN.

Belongs to the dynein heavy chain family. In terms of assembly, consists of at least two heavy chains (alpha and beta), three intermediate chains and several light chains.

The protein localises to the cell projection. Its subcellular location is the cilium. The protein resides in the flagellum. It is found in the cytoplasm. It localises to the cytoskeleton. The protein localises to the flagellum axoneme. In terms of biological role, force generating protein of eukaryotic cilia and flagella. Produces force towards the minus ends of microtubules. Dynein has ATPase activity; the force-producing power stroke is thought to occur on release of ADP. The polypeptide is Dynein beta chain, ciliary (Heliocidaris crassispina (Sea urchin)).